The primary structure comprises 443 residues: MFISVLLILFALCVTLIPEAHYHMVRVWSFVATIIPMWVVTWMWWNFDASGHGLQMLVILGRSHLAFGIDGVALSLMLLTTVLFPICMMLLRTVAGFMTFILLEVLVLSALCVLDLLGFYILFEASLILLFLLIGRAPYGSLEAAYKIVLYTMAGSLVLLPTLFMIYSECGTTNVLYMTCAYNHQTVLGWGLLAVLAVKIPLMPVHLWLPEAHVAAPTAGSVLLAGVLLKLGGIGFLRFMLPVVPEFCVSVFPLVSTLCLVSFLFSTLSTLRQIDLKKIVAYSSIAHMSMVTLAIFSQSEFSAYSSSFLMIAHGLISPALFLIVGILYDRAHTKFILYFSGLGASMPIGSTLFFLFTLGNLAFPLFPNFIAEVLCMVSIFAVHELLAYVFCVCQVLGAAYGFWAFNRVVHGLPRGPADVTRTEFHTVLPLLIGAVWLGIKPMA.

Helical transmembrane passes span 1–21, 27–47, 71–91, 93–113, 114–134, 148–168, 187–207, 217–237, 247–267, 279–299, 308–328, 335–355, 362–382, 385–405, and 423–443; these read MFIS…PEAH, VWSF…WWNF, GVAL…MMLL, TVAG…ALCV, LDLL…FLLI, IVLY…MIYS, VLGW…PVHL, PTAG…IGFL, FCVS…LFST, IVAY…FSQS, FLMI…GILY, FILY…LFFL, AFPL…IFAV, LLAY…FWAF, and EFHT…KPMA.

The protein belongs to the complex I subunit 4 family.

The protein localises to the mitochondrion membrane. The catalysed reaction is a ubiquinone + NADH + 5 H(+)(in) = a ubiquinol + NAD(+) + 4 H(+)(out). Its function is as follows. Core subunit of the mitochondrial membrane respiratory chain NADH dehydrogenase (Complex I) that is believed to belong to the minimal assembly required for catalysis. Complex I functions in the transfer of electrons from NADH to the respiratory chain. The immediate electron acceptor for the enzyme is believed to be ubiquinone. The sequence is that of NADH-ubiquinone oxidoreductase chain 4 (ND4) from Chlamydomonas reinhardtii (Chlamydomonas smithii).